The chain runs to 79 residues: Putative membrane protein insertion efficiency factor (79 aa).

Belongs to the UPF0161 family.

The protein resides in the cell inner membrane. Its function is as follows. Could be involved in insertion of integral membrane proteins into the membrane. This Prochlorococcus marinus (strain NATL2A) protein is Putative membrane protein insertion efficiency factor.